The following is a 273-amino-acid chain: Flagellin FljM (273 aa).

The protein belongs to the bacterial flagellin family. In terms of assembly, in C.crescentus, the flagellar filament is composed of multiple flagellins of 29 kDa; 27 kDa and 25 kDa.

Its subcellular location is the secreted. It is found in the bacterial flagellum. Functionally, flagellin is the subunit protein which polymerizes to form the filaments of bacterial flagella. In Caulobacter vibrioides (strain ATCC 19089 / CIP 103742 / CB 15) (Caulobacter crescentus), this protein is Flagellin FljM (fljM).